A 210-amino-acid chain; its full sequence is Redox-sensing transcriptional repressor Rex (210 aa).

Positions 17-56 (KYHRYLNELMKNDVDRISSKELGEKIGFTASQIRQDLNCF) form a DNA-binding region, H-T-H motif. 91–96 (GAGNIG) is an NAD(+) binding site.

It belongs to the transcriptional regulatory Rex family. Homodimer.

The protein localises to the cytoplasm. Modulates transcription in response to changes in cellular NADH/NAD(+) redox state. The protein is Redox-sensing transcriptional repressor Rex of Clostridium botulinum (strain Alaska E43 / Type E3).